We begin with the raw amino-acid sequence, 326 residues long: Delta-aminolevulinic acid dehydratase (326 aa).

Zn(2+)-binding residues include cysteine 119, cysteine 121, and cysteine 129. Lysine 198 acts as the Schiff-base intermediate with substrate in catalysis. The 5-aminolevulinate site is built by arginine 208 and arginine 220. Glutamate 236 contacts Mg(2+). Lysine 251 acts as the Schiff-base intermediate with substrate in catalysis. Residues serine 277 and tyrosine 316 each coordinate 5-aminolevulinate.

The protein belongs to the ALAD family. Homooctamer. Zn(2+) serves as cofactor.

It catalyses the reaction 2 5-aminolevulinate = porphobilinogen + 2 H2O + H(+). It functions in the pathway porphyrin-containing compound metabolism; protoporphyrin-IX biosynthesis; coproporphyrinogen-III from 5-aminolevulinate: step 1/4. In terms of biological role, catalyzes an early step in the biosynthesis of tetrapyrroles. Binds two molecules of 5-aminolevulinate per subunit, each at a distinct site, and catalyzes their condensation to form porphobilinogen. This chain is Delta-aminolevulinic acid dehydratase (hemB), found in Synechococcus elongatus (strain ATCC 33912 / PCC 7942 / FACHB-805) (Anacystis nidulans R2).